The chain runs to 150 residues: Testis-expressed protein 22 (150 aa).

Basic and acidic residues predominate over residues 1-23 (MDSRKLSPRGKKLESHLSQEHRR). Residues 1-26 (MDSRKLSPRGKKLESHLSQEHRRPPL) are disordered.

It is found in the cytoplasm. It localises to the cytoplasmic vesicle. The protein localises to the secretory vesicle. Its subcellular location is the acrosome. The sequence is that of Testis-expressed protein 22 (TEX22) from Homo sapiens (Human).